The following is a 148-amino-acid chain: Putative carbonic anhydrase (148 aa).

Residues 1–146 (CLKRLQPGEM…LNGRTVFEVH (146 aa)) enclose the Alpha-carbonic anhydrase domain.

This sequence belongs to the alpha-carbonic anhydrase family. The cofactor is Zn(2+). As to expression, component of the acid-insoluble organic matrix of the aragonitic skeleton (at protein level).

It localises to the secreted. It catalyses the reaction hydrogencarbonate + H(+) = CO2 + H2O. Its function is as follows. Reversible hydration of carbon dioxide. The sequence is that of Putative carbonic anhydrase from Acropora millepora (Staghorn coral).